Here is a 445-residue protein sequence, read N- to C-terminus: UNC93-like protein MFSD11 (445 aa).

The chain crosses the membrane as a helical span at residues 8–28 (LLNIIILGIGFMFMFTAFQTS). N40 carries N-linked (GlcNAc...) asparagine glycosylation. 4 helical membrane-spanning segments follow: residues 53-73 (AIIY…VAVI), 74-94 (GCQM…AMFI), 98-118 (TWSF…LWTA), and 138-158 (IFWA…YLAW). N163 carries an N-linked (GlcNAc...) asparagine glycan. A run of 7 helical transmembrane segments spans residues 170–190 (RTVF…FFLI), 239–259 (MLLL…YSGV), 277–297 (LIGL…GLFG), 309–329 (PVVI…YLYM), 345–365 (AFIN…GLGD), 385–405 (APAF…AFFY), and 415–435 (LLIL…VEWG).

This sequence belongs to the unc-93 family.

It localises to the membrane. The chain is UNC93-like protein MFSD11 (mfsd11) from Xenopus tropicalis (Western clawed frog).